Reading from the N-terminus, the 349-residue chain is Holliday junction branch migration complex subunit RuvB (349 aa).

The segment at 1–186 (MSEDYLDRDV…FGFTAHMDFY (186 aa)) is large ATPase domain (RuvB-L). ATP contacts are provided by residues leucine 25, arginine 26, glycine 67, lysine 70, threonine 71, serine 72, 133-135 (EDF), arginine 176, tyrosine 186, and arginine 223. Position 71 (threonine 71) interacts with Mg(2+). Positions 187-257 (EPTELEGVLA…VAKAALAVYD (71 aa)) are small ATPAse domain (RuvB-S). Positions 260–349 (ELGLDRLDRA…GLSQPGLFES (90 aa)) are head domain (RuvB-H). 2 residues coordinate DNA: arginine 315 and arginine 320.

The protein belongs to the RuvB family. Homohexamer. Forms an RuvA(8)-RuvB(12)-Holliday junction (HJ) complex. HJ DNA is sandwiched between 2 RuvA tetramers; dsDNA enters through RuvA and exits via RuvB. An RuvB hexamer assembles on each DNA strand where it exits the tetramer. Each RuvB hexamer is contacted by two RuvA subunits (via domain III) on 2 adjacent RuvB subunits; this complex drives branch migration. In the full resolvosome a probable DNA-RuvA(4)-RuvB(12)-RuvC(2) complex forms which resolves the HJ.

The protein localises to the cytoplasm. It catalyses the reaction ATP + H2O = ADP + phosphate + H(+). Functionally, the RuvA-RuvB-RuvC complex processes Holliday junction (HJ) DNA during genetic recombination and DNA repair, while the RuvA-RuvB complex plays an important role in the rescue of blocked DNA replication forks via replication fork reversal (RFR). RuvA specifically binds to HJ cruciform DNA, conferring on it an open structure. The RuvB hexamer acts as an ATP-dependent pump, pulling dsDNA into and through the RuvAB complex. RuvB forms 2 homohexamers on either side of HJ DNA bound by 1 or 2 RuvA tetramers; 4 subunits per hexamer contact DNA at a time. Coordinated motions by a converter formed by DNA-disengaged RuvB subunits stimulates ATP hydrolysis and nucleotide exchange. Immobilization of the converter enables RuvB to convert the ATP-contained energy into a lever motion, pulling 2 nucleotides of DNA out of the RuvA tetramer per ATP hydrolyzed, thus driving DNA branch migration. The RuvB motors rotate together with the DNA substrate, which together with the progressing nucleotide cycle form the mechanistic basis for DNA recombination by continuous HJ branch migration. Branch migration allows RuvC to scan DNA until it finds its consensus sequence, where it cleaves and resolves cruciform DNA. The sequence is that of Holliday junction branch migration complex subunit RuvB from Mycobacterium leprae (strain Br4923).